Consider the following 327-residue polypeptide: 1-aminocyclopropane-1-carboxylate oxidase 1 (327 aa).

Positions 157–257 constitute a Fe2OG dioxygenase domain; that stretch reads PTFGTKVSNY…RMSIASFYNP (101 aa). Fe cation is bound by residues H181, D183, and H238.

Belongs to the iron/ascorbate-dependent oxidoreductase family. Fe cation is required as a cofactor.

The catalysed reaction is 1-aminocyclopropane-1-carboxylate + L-ascorbate + O2 = ethene + L-dehydroascorbate + hydrogen cyanide + CO2 + 2 H2O. It functions in the pathway alkene biosynthesis; ethylene biosynthesis via S-adenosyl-L-methionine; ethylene from S-adenosyl-L-methionine: step 2/2. This chain is 1-aminocyclopropane-1-carboxylate oxidase 1 (ACO1), found in Doritaenopsis sp. (Moth orchid).